Reading from the N-terminus, the 340-residue chain is Sodium/bile acid cotransporter 7 (340 aa).

The Cytoplasmic portion of the chain corresponds to 1-10 (MRLLERARKE). Residues 11-31 (WFMVGIVVAIGAAKLEPSVGV) form a helical membrane-spanning segment. Residues 32-37 (NGGPLK) are Extracellular-facing. A helical transmembrane segment spans residues 38-58 (PEITVSYIAVATIFFNSGLSL). Residues 59–71 (KTEELTSALVHLR) are Cytoplasmic-facing. The chain crosses the membrane as a helical span at residues 72-92 (LHLFIQIFTLAFFPAAIWLFL). Residues 93–116 (QLLSVTSINEWLLKGLQTVGCMPP) are Extracellular-facing. The helical transmembrane segment at 117 to 137 (PVSSAVILTKAVGGNEAAAIF) threads the bilayer. Position 138 (asparagine 138) is a topological domain, cytoplasmic. Residues 139–159 (SAFGSFLGIVVTPVLLLLFLG) traverse the membrane as a helical segment. Over 160-163 (SSSS) the chain is Extracellular. The helical transmembrane segment at 164–184 (VPFTSIFSQLFMTVVVPLVIG) threads the bilayer. The Cytoplasmic portion of the chain corresponds to 185-201 (QIVRRYIKDWLERKKPP). The chain crosses the membrane as a helical span at residues 202–222 (FGVVSSSVLLMIIYTTFCDTF). Over 223–234 (SNPNIDLDKFSL) the chain is Extracellular. Residues 235 to 255 (ILILFIIVSVQLSFMLLTFIF) traverse the membrane as a helical segment. The Cytoplasmic portion of the chain corresponds to 256-270 (STRNNSGFTPADTVA). Residues 271–291 (IIFCSTHKSLTLGIPMLKIVF) form a helical membrane-spanning segment. Residues 292-298 (AGHEHLS) lie on the Extracellular side of the membrane. A helical membrane pass occupies residues 299 to 319 (LISVPLLIYHPAQILLGSVLV). Residues 320–340 (PTIKSWMVSRQKGVKLTRPTV) are Cytoplasmic-facing.

This sequence belongs to the bile acid:sodium symporter (BASS) (TC 2.A.28) family. As to expression, expressed in heart, brain, colon, lung, liver, adrenal gland, stomach and ovary. Also expressed weakly in small intestine. Expressed in skeletal tissues.

The protein resides in the cell membrane. It localises to the endoplasmic reticulum membrane. Its subcellular location is the golgi apparatus membrane. Involved in teeth and skeletal development. Has an essential role in the biosynthesis and trafficking of glycosaminoglycans and glycoproteins to produce a proper functioning extracellular matrix. Required for extracellular matrix mineralization. Also involved in the regulation of cellular calcium homeostasis. Does not show transport activity towards bile acids or steroid sulfates (including taurocholate, cholate, chenodeoxycholate, estrone-3-sulfate, dehydroepiandrosterone sulfate (DHEAS) and pregnenolone sulfate). The protein is Sodium/bile acid cotransporter 7 (Slc10a7) of Mus musculus (Mouse).